A 502-amino-acid chain; its full sequence is MSSFLHDSPVLEAPPIPFDNSYARLPPQFFAEQAPTPVAAPRLIKFNSVLASELGLDAEVLERDGAAIFSGNALLPGSQPLAMAYAGHQFGGFVPQLGDGRAILLGEVIDRNGRRRDIQLKGAGPTPFSRRGDGRAALGPVLREYIVSEAMFALGIPTTRALAAVTTGQPVYREEALPGAVFTRVAASHIRVGTFQYFAARGDTDSLRILADYVVDRHYPEIKDRKNRYLALLDAVADRQAALIARWLHVGFIHGVMNTDNMTISGETIDFGPCAFMDAYDPATVFSSIDRQGRYAYANQPAIGQWNLARLGETLLPLIDPTLDTAVELANGIIKAYGERFQTYWLAGMRAKIGLATEEDSDLDLVQSLLAVMQEQEADFTLTFRRLGVLAASVDNEAAFAASFKDPLSVAPWLSLWRERLGRDPQSPAARAKAMLGVNPAFVPRNHRIEQAIAAAVEEDDFSLFEALLAVLAKPYEDQPAFAPYAEPPRPAERVLQTFCGT.

Glycine 98, glycine 100, arginine 101, lysine 121, aspartate 133, glycine 134, arginine 184, and arginine 191 together coordinate ATP. The active-site Proton acceptor is aspartate 260. Residues asparagine 261 and aspartate 270 each coordinate Mg(2+). Aspartate 270 is an ATP binding site.

It belongs to the SELO family. Mg(2+) serves as cofactor. Requires Mn(2+) as cofactor.

It carries out the reaction L-seryl-[protein] + ATP = 3-O-(5'-adenylyl)-L-seryl-[protein] + diphosphate. The enzyme catalyses L-threonyl-[protein] + ATP = 3-O-(5'-adenylyl)-L-threonyl-[protein] + diphosphate. The catalysed reaction is L-tyrosyl-[protein] + ATP = O-(5'-adenylyl)-L-tyrosyl-[protein] + diphosphate. It catalyses the reaction L-histidyl-[protein] + UTP = N(tele)-(5'-uridylyl)-L-histidyl-[protein] + diphosphate. It carries out the reaction L-seryl-[protein] + UTP = O-(5'-uridylyl)-L-seryl-[protein] + diphosphate. The enzyme catalyses L-tyrosyl-[protein] + UTP = O-(5'-uridylyl)-L-tyrosyl-[protein] + diphosphate. Nucleotidyltransferase involved in the post-translational modification of proteins. It can catalyze the addition of adenosine monophosphate (AMP) or uridine monophosphate (UMP) to a protein, resulting in modifications known as AMPylation and UMPylation. The polypeptide is Protein nucleotidyltransferase YdiU (Rhizobium rhizogenes (strain K84 / ATCC BAA-868) (Agrobacterium radiobacter)).